Here is a 177-residue protein sequence, read N- to C-terminus: Platelet glycoprotein IX (177 aa).

A signal peptide spans 1-16; it reads MPAWGALFLLWATAEA. Residues 17–51 form the LRRNT domain; sequence TKDCPSPCTCRALETMGLWVDCRGHGLTALPALPA. The Extracellular portion of the chain corresponds to 17–147; it reads TKDCPSPCTC…QLQASWVRPG (131 aa). Residue Asn-60 is glycosylated (N-linked (GlcNAc...) asparagine). The LRR repeat unit spans residues 60-83; the sequence is NNSLQSVPPGAFDHLPQLQTLDVT. In terms of domain architecture, LRRCT spans 85-137; sequence NPWHCDCSLTYLRLWLEDRTPEALLQVRCASPSLAAHGPLGRLTGYQLGSCGW. Residues 148–168 form a helical membrane-spanning segment; sequence VLWDVALVAVAALGLALLAGL. The Cytoplasmic segment spans residues 169-177; the sequence is LCATTEALD.

Two GP-Ib beta are disulfide-linked to one GP-Ib alpha. GP-IX is complexed with the GP-Ib heterodimer via a non covalent linkage.

It is found in the membrane. In terms of biological role, the GPIb-V-IX complex functions as the vWF receptor and mediates vWF-dependent platelet adhesion to blood vessels. The adhesion of platelets to injured vascular surfaces in the arterial circulation is a critical initiating event in hemostasis. GP-IX may provide for membrane insertion and orientation of GP-Ib. The polypeptide is Platelet glycoprotein IX (GP9) (Homo sapiens (Human)).